Consider the following 360-residue polypeptide: UDP-N-acetylglucosamine--N-acetylmuramyl-(pentapeptide) pyrophosphoryl-undecaprenol N-acetylglucosamine transferase (360 aa).

UDP-N-acetyl-alpha-D-glucosamine-binding positions include Thr-14 to Gly-16, Asn-131, Arg-167, Ser-195, Ile-249, and Gln-294.

Belongs to the glycosyltransferase 28 family. MurG subfamily.

It localises to the cell inner membrane. The enzyme catalyses di-trans,octa-cis-undecaprenyl diphospho-N-acetyl-alpha-D-muramoyl-L-alanyl-D-glutamyl-meso-2,6-diaminopimeloyl-D-alanyl-D-alanine + UDP-N-acetyl-alpha-D-glucosamine = di-trans,octa-cis-undecaprenyl diphospho-[N-acetyl-alpha-D-glucosaminyl-(1-&gt;4)]-N-acetyl-alpha-D-muramoyl-L-alanyl-D-glutamyl-meso-2,6-diaminopimeloyl-D-alanyl-D-alanine + UDP + H(+). It functions in the pathway cell wall biogenesis; peptidoglycan biosynthesis. Its function is as follows. Cell wall formation. Catalyzes the transfer of a GlcNAc subunit on undecaprenyl-pyrophosphoryl-MurNAc-pentapeptide (lipid intermediate I) to form undecaprenyl-pyrophosphoryl-MurNAc-(pentapeptide)GlcNAc (lipid intermediate II). This chain is UDP-N-acetylglucosamine--N-acetylmuramyl-(pentapeptide) pyrophosphoryl-undecaprenol N-acetylglucosamine transferase, found in Polaromonas naphthalenivorans (strain CJ2).